Consider the following 279-residue polypeptide: Small ribosomal subunit protein uS2 (279 aa).

It belongs to the universal ribosomal protein uS2 family. In terms of assembly, component of the small ribosomal subunit. Mature ribosomes consist of a small (40S) and a large (60S) subunit. The 40S subunit contains about 33 different proteins and 1 molecule of RNA (18S). The 60S subunit contains about 49 different proteins and 3 molecules of RNA (25S, 5.8S and 5S). Interacts with ribosomal protein S21.

It is found in the cytoplasm. Functionally, required for the assembly and/or stability of the 40S ribosomal subunit. Required for the processing of the 20S rRNA-precursor to mature 18S rRNA in a late step of the maturation of 40S ribosomal subunits. The protein is Small ribosomal subunit protein uS2 of Chlamydomonas reinhardtii (Chlamydomonas smithii).